The following is a 290-amino-acid chain: Glycine--tRNA ligase alpha subunit (290 aa).

It belongs to the class-II aminoacyl-tRNA synthetase family. In terms of assembly, tetramer of two alpha and two beta subunits.

Its subcellular location is the cytoplasm. It catalyses the reaction tRNA(Gly) + glycine + ATP = glycyl-tRNA(Gly) + AMP + diphosphate. This chain is Glycine--tRNA ligase alpha subunit, found in Gloeobacter violaceus (strain ATCC 29082 / PCC 7421).